We begin with the raw amino-acid sequence, 138 residues long: Mitochondrial import inner membrane translocase subunit tim-16 (138 aa).

A compositionally biased stretch (low complexity) spans 32–43 (TQQAAARHAAAT). Disordered stretches follow at residues 32–58 (TQQA…NANA) and 118–138 (LSRL…NSKE). A compositionally biased stretch (polar residues) spans 44–56 (GQSPSETKENANA). Positions 66 to 119 (ESLQILNVKTPLNREDVEKHYEHLFAINDKAKGGTFYLQSKVYRAKERIDEELS) are J-like.

This sequence belongs to the TIM16/PAM16 family. Probable component of the PAM complex at least composed of a mitochondrial HSP70 protein, GrpE, tim-44, tim-16 and tim-14. Associates with the TIM23 complex.

The protein resides in the mitochondrion inner membrane. Functionally, regulates ATP-dependent protein translocation into the mitochondrial matrix. The sequence is that of Mitochondrial import inner membrane translocase subunit tim-16 from Caenorhabditis briggsae.